The sequence spans 422 residues: Proline--tRNA ligase (422 aa).

It belongs to the class-II aminoacyl-tRNA synthetase family. ProS type 2 subfamily. As to quaternary structure, homodimer.

It is found in the cytoplasm. The enzyme catalyses tRNA(Pro) + L-proline + ATP = L-prolyl-tRNA(Pro) + AMP + diphosphate. In terms of biological role, catalyzes the attachment of proline to tRNA(Pro) in a two-step reaction: proline is first activated by ATP to form Pro-AMP and then transferred to the acceptor end of tRNA(Pro). The protein is Proline--tRNA ligase of Wolbachia sp. subsp. Drosophila simulans (strain wRi).